The sequence spans 213 residues: Orotate phosphoribosyltransferase (213 aa).

A 5-phospho-alpha-D-ribose 1-diphosphate-binding site is contributed by Lys-26. Position 34–35 (34–35 (FF)) interacts with orotate. 5-phospho-alpha-D-ribose 1-diphosphate is bound by residues 72–73 (YK), Arg-99, Lys-100, Lys-103, His-105, and 124–132 (DDVITAGTA). Orotate-binding residues include Thr-128 and Arg-156.

Belongs to the purine/pyrimidine phosphoribosyltransferase family. PyrE subfamily. Homodimer. The cofactor is Mg(2+).

It catalyses the reaction orotidine 5'-phosphate + diphosphate = orotate + 5-phospho-alpha-D-ribose 1-diphosphate. Its pathway is pyrimidine metabolism; UMP biosynthesis via de novo pathway; UMP from orotate: step 1/2. Functionally, catalyzes the transfer of a ribosyl phosphate group from 5-phosphoribose 1-diphosphate to orotate, leading to the formation of orotidine monophosphate (OMP). The sequence is that of Orotate phosphoribosyltransferase from Salmonella arizonae (strain ATCC BAA-731 / CDC346-86 / RSK2980).